A 1269-amino-acid polypeptide reads, in one-letter code: DNA-directed RNA polymerase subunit beta (1269 aa).

This sequence belongs to the RNA polymerase beta chain family. In terms of assembly, the RNAP catalytic core consists of 2 alpha, 1 beta, 1 beta' and 1 omega subunit. When a sigma factor is associated with the core the holoenzyme is formed, which can initiate transcription.

The enzyme catalyses RNA(n) + a ribonucleoside 5'-triphosphate = RNA(n+1) + diphosphate. Functionally, DNA-dependent RNA polymerase catalyzes the transcription of DNA into RNA using the four ribonucleoside triphosphates as substrates. In Porphyromonas gingivalis (strain ATCC BAA-308 / W83), this protein is DNA-directed RNA polymerase subunit beta.